The sequence spans 2510 residues: Highly reducing polyketide synthase g433 (2510 aa).

Positions 1 to 54 (MAPGRTDVTVAENGNGLHTAHNGVSNGTSNGTNGTSHTSNGTNSSAKTTSNGVH) are disordered. Residues 22-45 (NGVSNGTSNGTNGTSHTSNGTNSS) are compositionally biased toward low complexity. The 420-residue stretch at 58 to 477 (DIPIAIVGMG…GANAHAVIDS (420 aa)) folds into the Ketosynthase family 3 (KS3) domain. Catalysis depends on for beta-ketoacyl synthase activity residues Cys229, His365, and His400. Residues 574–880 (FVFTGQGAQW…VPTLVRGQND (307 aa)) are malonyl-CoA:ACP transacylase (MAT) domain. An N-terminal hotdog fold region spans residues 942–1070 (HDLLGCQVFE…GQVKAGRADS (129 aa)). Positions 942 to 1226 (HDLLGCQVFE…NLRLAPAADD (285 aa)) are dehydratase (DH) domain. Residues 942-1229 (HDLLGCQVFE…LAPAADDTGG (288 aa)) form the PKS/mFAS DH domain. Catalysis depends on His974, which acts as the Proton acceptor; for dehydratase activity. Positions 1083 to 1229 (PRKVSSTRWY…LAPAADDTGG (147 aa)) are C-terminal hotdog fold. Residue Asp1144 is the Proton donor; for dehydratase activity of the active site. The tract at residues 1395 to 1574 (DFLGLVSHDK…FDGAEAVIYD (180 aa)) is methyltransferase (CMet) domain. An enoyl reductase (ER) (ER) domain region spans residues 1787–2097 (GSLKTLRWVQ…KGQHMGKLVI (311 aa)). Positions 2122-2296 (SYLLVGGLGG…ASVLDISIIE (175 aa)) are ketoreductase (KR) domain. The region spanning 2419-2496 (SSVSFLANEI…KLGEAAAEGL (78 aa)) is the Carrier domain. At Ser2456 the chain carries O-(pantetheine 4'-phosphoryl)serine.

It functions in the pathway mycotoxin biosynthesis. Its function is as follows. Highly reducing polyketide synthase; part of the gene cluster that mediates the biosynthesis of 1233A, a natural compound known as an inhibitor of HMG-CoA synthase in the mevalonate pathway and with antibacterial and antifungal activities. The highly reducing polyketide synthase g433 gene is responsible for the 1233A backbone biosynthesis and the cytochrome P450 monooxygenase g430 catalyzes oxidation of the backbone. This is Highly reducing polyketide synthase g433 from Fusarium sp.